The sequence spans 344 residues: S-adenosylmethionine:tRNA ribosyltransferase-isomerase (344 aa).

It belongs to the QueA family. In terms of assembly, monomer.

The protein resides in the cytoplasm. It carries out the reaction 7-aminomethyl-7-carbaguanosine(34) in tRNA + S-adenosyl-L-methionine = epoxyqueuosine(34) in tRNA + adenine + L-methionine + 2 H(+). It functions in the pathway tRNA modification; tRNA-queuosine biosynthesis. Its function is as follows. Transfers and isomerizes the ribose moiety from AdoMet to the 7-aminomethyl group of 7-deazaguanine (preQ1-tRNA) to give epoxyqueuosine (oQ-tRNA). This Heliobacterium modesticaldum (strain ATCC 51547 / Ice1) protein is S-adenosylmethionine:tRNA ribosyltransferase-isomerase.